Consider the following 371-residue polypeptide: Histidinol-phosphate aminotransferase (371 aa).

The residue at position 228 (Lys228) is an N6-(pyridoxal phosphate)lysine.

The protein belongs to the class-II pyridoxal-phosphate-dependent aminotransferase family. Histidinol-phosphate aminotransferase subfamily. The cofactor is pyridoxal 5'-phosphate.

The catalysed reaction is L-histidinol phosphate + 2-oxoglutarate = 3-(imidazol-4-yl)-2-oxopropyl phosphate + L-glutamate. The protein operates within amino-acid biosynthesis; L-histidine biosynthesis; L-histidine from 5-phospho-alpha-D-ribose 1-diphosphate: step 7/9. This chain is Histidinol-phosphate aminotransferase, found in Methanococcus maripaludis (strain C6 / ATCC BAA-1332).